Reading from the N-terminus, the 258-residue chain is Phosphate import ATP-binding protein PstB (258 aa).

Residues 5–247 (LDLKDVNIYY…EKIFSNPRQK (243 aa)) form the ABC transporter domain. 37–44 (GPSGCGKS) contacts ATP.

It belongs to the ABC transporter superfamily. Phosphate importer (TC 3.A.1.7) family. As to quaternary structure, the complex is composed of two ATP-binding proteins (PstB), two transmembrane proteins (PstC and PstA) and a solute-binding protein (PstS).

The protein resides in the cell membrane. The catalysed reaction is phosphate(out) + ATP + H2O = ADP + 2 phosphate(in) + H(+). In terms of biological role, part of the ABC transporter complex PstSACB involved in phosphate import. Responsible for energy coupling to the transport system. This is Phosphate import ATP-binding protein PstB from Mycolicibacterium smegmatis (Mycobacterium smegmatis).